Reading from the N-terminus, the 232-residue chain is MSQYCAADPIQRMVSRKGPYLDTQQQRVYKHRSGTGHGTNIRQPTTGIVEATFLQNNSGMNAVHPTTLNVQTHNAHATGRTIAKSVDTNSWVNDFSSMKVQDPLEFADSYKNLYKQYEQKQFHNTVPAQCPRNLYIPTVTRPQTTLNIVDHHEDKSSAVDQLIDDEFEKIEEEVKDQNQKLEFQESAQSFIEICERSQMKEKLQRSKFFQVMQKVSDGEATIRQDGENYVIR.

A Glycyl cysteine thioester (Cys-Gly) (interchain with G-Cter in ubiquitin) cross-link involves residue cysteine 5.

This sequence belongs to the peroxin-21 family. Interacts with PEX7. In terms of processing, monoubiquitinated at Cys-5; acts as a signal for PEX21 extraction and is required for proper export from peroxisomes and recycling.

The protein localises to the cytoplasm. It is found in the cytosol. Its subcellular location is the peroxisome. In terms of biological role, mediates peroxisomal import of proteins containing a C-terminal PTS2-type peroxisomal targeting signal via its interaction with PEX7. Interaction with PEX7 only takes place when PEX7 is associated with cargo proteins containing a PTS2 peroxisomal targeting signal. PEX7 along with PTS2-containing cargo proteins are then translocated through the PEX13-PEX14 docking complex together with PEX21. This is Peroxisomal protein PEX21 (PEX21) from Candida glabrata (strain ATCC 2001 / BCRC 20586 / JCM 3761 / NBRC 0622 / NRRL Y-65 / CBS 138) (Yeast).